Consider the following 300-residue polypeptide: Aspartate carbamoyltransferase catalytic subunit (300 aa).

Residues R54 and T55 each contribute to the carbamoyl phosphate site. K82 provides a ligand contact to L-aspartate. 3 residues coordinate carbamoyl phosphate: R104, H131, and Q134. 2 residues coordinate L-aspartate: R164 and R213. Positions 256 and 257 each coordinate carbamoyl phosphate.

The protein belongs to the aspartate/ornithine carbamoyltransferase superfamily. ATCase family. Heterododecamer (2C3:3R2) of six catalytic PyrB chains organized as two trimers (C3), and six regulatory PyrI chains organized as three dimers (R2).

The enzyme catalyses carbamoyl phosphate + L-aspartate = N-carbamoyl-L-aspartate + phosphate + H(+). Its pathway is pyrimidine metabolism; UMP biosynthesis via de novo pathway; (S)-dihydroorotate from bicarbonate: step 2/3. Functionally, catalyzes the condensation of carbamoyl phosphate and aspartate to form carbamoyl aspartate and inorganic phosphate, the committed step in the de novo pyrimidine nucleotide biosynthesis pathway. The polypeptide is Aspartate carbamoyltransferase catalytic subunit (Malacoplasma penetrans (strain HF-2) (Mycoplasma penetrans)).